The sequence spans 189 residues: MVKVIASSVRKGNVLDVDGKLYVVLTAQNFHPGKGTPVTQVDMRRISDGVKVSERYRTTEQVERAFVEDREHTFLYEDAEGFHFMNPESYDQLVMSADDIGDLKAYLQEGMAVMLSIHEGIAIAIDLPRHVTLEITETEPVVKGQTASSSYKPALLSNGVRTSVPPHIQAGTRVVIATEDGSYVERAKD.

This sequence belongs to the elongation factor P family.

It is found in the cytoplasm. It functions in the pathway protein biosynthesis; polypeptide chain elongation. In terms of biological role, involved in peptide bond synthesis. Stimulates efficient translation and peptide-bond synthesis on native or reconstituted 70S ribosomes in vitro. Probably functions indirectly by altering the affinity of the ribosome for aminoacyl-tRNA, thus increasing their reactivity as acceptors for peptidyl transferase. The sequence is that of Elongation factor P from Sinorhizobium fredii (strain NBRC 101917 / NGR234).